The following is a 242-amino-acid chain: MGRYWAVIPAAGVGRRMGGGDRPKQYRLLLGRPVIGWALERLLGHPKVAGAVVALAADDPHWDALGLDRQVAGKPVHRVEGGAERRDSVRAALAYLGGIANPEDRVLVHDAVRPCLSAAELDRLIDEGGAAVDGALLATPVRDTLKRADGDCVGATVSREGLWQAQTPQLFPLRRLSAALDAALAAGVAVTDEAQAVEWHDGQPRLVTGEAGNLKITHQADLDLAAAVLTAQRAATEREQTA.

The protein belongs to the IspD/TarI cytidylyltransferase family. IspD subfamily.

It carries out the reaction 2-C-methyl-D-erythritol 4-phosphate + CTP + H(+) = 4-CDP-2-C-methyl-D-erythritol + diphosphate. The protein operates within isoprenoid biosynthesis; isopentenyl diphosphate biosynthesis via DXP pathway; isopentenyl diphosphate from 1-deoxy-D-xylulose 5-phosphate: step 2/6. Catalyzes the formation of 4-diphosphocytidyl-2-C-methyl-D-erythritol from CTP and 2-C-methyl-D-erythritol 4-phosphate (MEP). This Halorhodospira halophila (strain DSM 244 / SL1) (Ectothiorhodospira halophila (strain DSM 244 / SL1)) protein is 2-C-methyl-D-erythritol 4-phosphate cytidylyltransferase.